The following is a 157-amino-acid chain: Small ribosomal subunit protein uS7 (157 aa).

The protein belongs to the universal ribosomal protein uS7 family. As to quaternary structure, part of the 30S ribosomal subunit. Contacts proteins S9 and S11.

In terms of biological role, one of the primary rRNA binding proteins, it binds directly to 16S rRNA where it nucleates assembly of the head domain of the 30S subunit. Is located at the subunit interface close to the decoding center, probably blocks exit of the E-site tRNA. This Chloroflexus aggregans (strain MD-66 / DSM 9485) protein is Small ribosomal subunit protein uS7.